A 412-amino-acid chain; its full sequence is Protein arginine N-methyltransferase 2 (412 aa).

Residues 190–412 (TAADPDTYLN…YYYHPKISFA (223 aa)) form the RMT2 domain. S-adenosyl-L-methionine is bound by residues Y197, M227, 250–255 (FGMGII), 271–273 (EAH), 298–299 (WQ), and D319.

This sequence belongs to the class I-like SAM-binding methyltransferase superfamily. RMT2 methyltransferase family. Monomer.

Its subcellular location is the cytoplasm. The protein resides in the nucleus. S-adenosyl-L-methionine-dependent protein-arginine N-methyltransferase that methylates the delta-nitrogen atom of arginine residues to form N5-methylarginine (type IV) in target proteins. Monomethylates ribosomal protein L12. This chain is Protein arginine N-methyltransferase 2, found in Candida glabrata (strain ATCC 2001 / BCRC 20586 / JCM 3761 / NBRC 0622 / NRRL Y-65 / CBS 138) (Yeast).